The primary structure comprises 193 residues: ATP-dependent Clp protease proteolytic subunit (193 aa).

Residue S97 is the Nucleophile of the active site. H122 is an active-site residue.

It belongs to the peptidase S14 family. As to quaternary structure, fourteen ClpP subunits assemble into 2 heptameric rings which stack back to back to give a disk-like structure with a central cavity, resembling the structure of eukaryotic proteasomes.

It localises to the cytoplasm. It catalyses the reaction Hydrolysis of proteins to small peptides in the presence of ATP and magnesium. alpha-casein is the usual test substrate. In the absence of ATP, only oligopeptides shorter than five residues are hydrolyzed (such as succinyl-Leu-Tyr-|-NHMec, and Leu-Tyr-Leu-|-Tyr-Trp, in which cleavage of the -Tyr-|-Leu- and -Tyr-|-Trp bonds also occurs).. In terms of biological role, cleaves peptides in various proteins in a process that requires ATP hydrolysis. Has a chymotrypsin-like activity. Plays a major role in the degradation of misfolded proteins. The protein is ATP-dependent Clp protease proteolytic subunit of Fusobacterium nucleatum subsp. nucleatum (strain ATCC 25586 / DSM 15643 / BCRC 10681 / CIP 101130 / JCM 8532 / KCTC 2640 / LMG 13131 / VPI 4355).